The sequence spans 360 residues: Peptide chain release factor 1 (360 aa).

N5-methylglutamine is present on Gln-235. A compositionally biased stretch (basic and acidic residues) spans 281–307; sequence ERQRADSERSADRRNQVGSGDRSERIR. Residues 281-310 are disordered; that stretch reads ERQRADSERSADRRNQVGSGDRSERIRTYN.

The protein belongs to the prokaryotic/mitochondrial release factor family. Methylated by PrmC. Methylation increases the termination efficiency of RF1.

The protein localises to the cytoplasm. Functionally, peptide chain release factor 1 directs the termination of translation in response to the peptide chain termination codons UAG and UAA. This Sinorhizobium medicae (strain WSM419) (Ensifer medicae) protein is Peptide chain release factor 1.